The following is a 318-amino-acid chain: Ribosomal RNA small subunit methyltransferase H (318 aa).

S-adenosyl-L-methionine is bound by residues 35–37 (GGH), Asp54, Phe83, Asp104, and Gln111.

It belongs to the methyltransferase superfamily. RsmH family.

It localises to the cytoplasm. It carries out the reaction cytidine(1402) in 16S rRNA + S-adenosyl-L-methionine = N(4)-methylcytidine(1402) in 16S rRNA + S-adenosyl-L-homocysteine + H(+). Its function is as follows. Specifically methylates the N4 position of cytidine in position 1402 (C1402) of 16S rRNA. The chain is Ribosomal RNA small subunit methyltransferase H from Latilactobacillus sakei subsp. sakei (strain 23K) (Lactobacillus sakei subsp. sakei).